The chain runs to 545 residues: MTTNYIFVTGGVVSSLGKGIAAASLAAILEARGLNVTIMKLDPYINVDPGTMSPTQHGEVFVTEDGAETDLDLGHYERFIRTKMTRRNNFTTGRIYSEVLRKERRGDYLGATIQVIPHITNAIKERIIEGGEGHDVVLVEIGGTVGDIESLPFLEAIRQMAVDVGREHTLYMHLTLVPYLAAAGEVKTKPTQHSVKELLSIGIQPDVLICRSDRAVPANERAKIALFCNVPEKAVISLKDVDSIYKIPGLLKSQGLDDYICKRFSLTCPEANLAEWEQVLYEESNPGGEVTIGMIGKYVELPDAYKSVIEALKHGGLKNRLTVNIKLIDSQDVETRGEEMLKELDAILIPGGFGYRGVEGKVLAARYAREHNIPYLGICLGMQVALMEFARNVAGMENANSTEFVPDCKYPVVALITEWRDEDGNVEIRTEESDLGGTMRVGGQQCHLTEGSLVRQMYGEPTIVERHRHRYEVNNMLLKQIEAAGLRVAGRSADNKLVEIIELPDHPWFVACQFHPEFTSTPRDGHPLFAGFVKAAGDYQKRQVK.

The interval 1–266 (MTTNYIFVTG…DDYICKRFSL (266 aa)) is amidoligase domain. A CTP-binding site is contributed by serine 14. Serine 14 provides a ligand contact to UTP. Residues 15–20 (SLGKGI) and aspartate 72 contribute to the ATP site. Positions 72 and 140 each coordinate Mg(2+). CTP contacts are provided by residues 147–149 (DIE), 187–192 (KTKPTQ), and lysine 223. UTP is bound by residues 187 to 192 (KTKPTQ) and lysine 223. 239 to 241 (KDV) is a binding site for ATP. Residues 291–542 (TIGMIGKYVE…VKAAGDYQKR (252 aa)) form the Glutamine amidotransferase type-1 domain. L-glutamine is bound at residue glycine 352. The Nucleophile; for glutamine hydrolysis role is filled by cysteine 379. L-glutamine is bound by residues 380 to 383 (LGMQ), glutamate 403, and arginine 470. Active-site residues include histidine 515 and glutamate 517.

The protein belongs to the CTP synthase family. Homotetramer.

It carries out the reaction UTP + L-glutamine + ATP + H2O = CTP + L-glutamate + ADP + phosphate + 2 H(+). It catalyses the reaction L-glutamine + H2O = L-glutamate + NH4(+). The catalysed reaction is UTP + NH4(+) + ATP = CTP + ADP + phosphate + 2 H(+). It participates in pyrimidine metabolism; CTP biosynthesis via de novo pathway; CTP from UDP: step 2/2. Allosterically activated by GTP, when glutamine is the substrate; GTP has no effect on the reaction when ammonia is the substrate. The allosteric effector GTP functions by stabilizing the protein conformation that binds the tetrahedral intermediate(s) formed during glutamine hydrolysis. Inhibited by the product CTP, via allosteric rather than competitive inhibition. Catalyzes the ATP-dependent amination of UTP to CTP with either L-glutamine or ammonia as the source of nitrogen. Regulates intracellular CTP levels through interactions with the four ribonucleotide triphosphates. The protein is CTP synthase of Yersinia pseudotuberculosis serotype O:1b (strain IP 31758).